The chain runs to 160 residues: Deoxyuridine 5'-triphosphate nucleotidohydrolase (160 aa).

Substrate-binding positions include 79–81 (RSG), Asn92, 96–98 (TVD), and Lys106.

It belongs to the dUTPase family. Mg(2+) is required as a cofactor.

The catalysed reaction is dUTP + H2O = dUMP + diphosphate + H(+). Its pathway is pyrimidine metabolism; dUMP biosynthesis; dUMP from dCTP (dUTP route): step 2/2. In terms of biological role, this enzyme is involved in nucleotide metabolism: it produces dUMP, the immediate precursor of thymidine nucleotides and it decreases the intracellular concentration of dUTP so that uracil cannot be incorporated into DNA. This Sinorhizobium medicae (strain WSM419) (Ensifer medicae) protein is Deoxyuridine 5'-triphosphate nucleotidohydrolase.